A 495-amino-acid chain; its full sequence is Transcription termination/antitermination protein NusA (495 aa).

One can recognise an S1 motif domain in the interval 135 to 200 (GEIITGVVKK…RGAQLFVTRS (66 aa)). Residues 302–368 (KHTMDIAVEA…FTKYLDIDED (67 aa)) enclose the KH domain. Repeat copies occupy residues 364 to 414 (DIDE…KNAL) and 439 to 489 (GVDR…RNIC). Positions 364–489 (DIDEDFATVL…ALIMAARNIC (126 aa)) are 2 X 51 AA approximate repeats.

The protein belongs to the NusA family. As to quaternary structure, monomer. Binds directly to the core enzyme of the DNA-dependent RNA polymerase and to nascent RNA.

It localises to the cytoplasm. Functionally, participates in both transcription termination and antitermination. In Shigella flexneri, this protein is Transcription termination/antitermination protein NusA.